The following is a 204-amino-acid chain: Proteasome subunit beta 1 (204 aa).

Residues 1–9 (MSYEYGTGA) constitute a propeptide, removed in mature form; by autocatalysis. The Nucleophile role is filled by threonine 10.

The protein belongs to the peptidase T1B family. In terms of assembly, the 20S proteasome core is composed of 14 alpha and 14 beta subunits that assemble into four stacked heptameric rings, resulting in a barrel-shaped structure. The two inner rings, each composed of seven catalytic beta subunits, are sandwiched by two outer rings, each composed of seven alpha subunits. The catalytic chamber with the active sites is on the inside of the barrel. Has a gated structure, the ends of the cylinder being occluded by the N-termini of the alpha-subunits. Is capped at one or both ends by the proteasome regulatory ATPase, PAN.

Its subcellular location is the cytoplasm. The enzyme catalyses Cleavage of peptide bonds with very broad specificity.. With respect to regulation, the formation of the proteasomal ATPase PAN-20S proteasome complex, via the docking of the C-termini of PAN into the intersubunit pockets in the alpha-rings, triggers opening of the gate for substrate entry. Interconversion between the open-gate and close-gate conformations leads to a dynamic regulation of the 20S proteasome proteolysis activity. Component of the proteasome core, a large protease complex with broad specificity involved in protein degradation. The polypeptide is Proteasome subunit beta 1 (Hyperthermus butylicus (strain DSM 5456 / JCM 9403 / PLM1-5)).